A 358-amino-acid polypeptide reads, in one-letter code: Photosystem II protein D1 2 (358 aa).

A run of 3 helical transmembrane segments spans residues 28–45 (YVGWFGVLMIPCLLAATI), 117–132 (HFLIGISAYMGRQWEL), and 141–155 (WICVAYAAPLSAAMV). Chlorophyll a is bound at residue His-117. Position 125 (Tyr-125) interacts with pheophytin a. 2 residues coordinate [CaMn4O5] cluster: Asp-169 and Glu-188. The helical transmembrane segment at 196–217 (FHMLGVAGVFGGSLFSAMHGSL) threads the bilayer. His-197 provides a ligand contact to chlorophyll a. Residues His-214 and 263-264 (SF) contribute to the a quinone site. His-214 is a binding site for Fe cation. His-271 is a binding site for Fe cation. A helical transmembrane segment spans residues 273–287 (FLAAWPVVGIWFTSM). Residues His-331, Glu-332, Asp-341, and Ala-343 each contribute to the [CaMn4O5] cluster site. Residues 344–358 (TTESAPVALQAPAVG) constitute a propeptide that is removed on maturation.

It belongs to the reaction center PufL/M/PsbA/D family. As to quaternary structure, PSII is composed of 1 copy each of membrane proteins PsbA, PsbB, PsbC, PsbD, PsbE, PsbF, PsbH, PsbI, PsbJ, PsbK, PsbL, PsbM, PsbT, PsbX, PsbY, PsbZ, Psb30/Ycf12, peripheral proteins PsbO, CyanoQ (PsbQ), PsbU, PsbV and a large number of cofactors. It forms dimeric complexes. Requires The D1/D2 heterodimer binds P680, chlorophylls that are the primary electron donor of PSII, and subsequent electron acceptors. It shares a non-heme iron and each subunit binds pheophytin, quinone, additional chlorophylls, carotenoids and lipids. D1 provides most of the ligands for the Mn4-Ca-O5 cluster of the oxygen-evolving complex (OEC). There is also a Cl(-1) ion associated with D1 and D2, which is required for oxygen evolution. The PSII complex binds additional chlorophylls, carotenoids and specific lipids. as cofactor. Post-translationally, tyr-160 forms a radical intermediate that is referred to as redox-active TyrZ, YZ or Y-Z. C-terminally processed by CtpA; processing is essential to allow assembly of the oxygen-evolving complex and thus photosynthetic growth.

The protein localises to the cellular thylakoid membrane. It catalyses the reaction 2 a plastoquinone + 4 hnu + 2 H2O = 2 a plastoquinol + O2. Its function is as follows. Photosystem II (PSII) is a light-driven water:plastoquinone oxidoreductase that uses light energy to abstract electrons from H(2)O, generating O(2) and a proton gradient subsequently used for ATP formation. It consists of a core antenna complex that captures photons, and an electron transfer chain that converts photonic excitation into a charge separation. The D1/D2 (PsbA/PsbD) reaction center heterodimer binds P680, the primary electron donor of PSII as well as several subsequent electron acceptors. This chain is Photosystem II protein D1 2, found in Synechococcus sp. (strain RCC307).